Reading from the N-terminus, the 685-residue chain is Putative alpha-1,3-mannosyltransferase MNN14 (685 aa).

The Cytoplasmic portion of the chain corresponds to 1 to 13; it reads MGLLSIPYQSKSK. A helical membrane pass occupies residues 14–34; the sequence is LWIAIFLVVWSLISMHFIWQS. Over 35–685 the chain is Lumenal; it reads QANSGLILKN…EIWMRGYNYL (651 aa). 4 N-linked (GlcNAc...) asparagine glycosylation sites follow: asparagine 199, asparagine 338, asparagine 408, and asparagine 556.

This sequence belongs to the MNN1/MNT family.

The protein resides in the golgi apparatus membrane. The protein operates within protein modification; protein glycosylation. Its function is as follows. Responsible for addition of the terminal mannose residues to the outer chain of core N-linked polysaccharides and to O-linked mannotriose. Implicated in late Golgi modifications. Involved in virulence. In Candida albicans (strain SC5314 / ATCC MYA-2876) (Yeast), this protein is Putative alpha-1,3-mannosyltransferase MNN14 (MNN14).